The primary structure comprises 306 residues: Palmitoyl-protein thioesterase ABHD10, mitochondrial (306 aa).

Residues 1-52 (MAGVGLAAVPAWVPCRRWGLAAVTFGFHHGLSTLLARKTERAPQWLRACRHK) constitute a mitochondrion transit peptide. The AB hydrolase-1 domain maps to 78-177 (IIFIPGYISN…KVVALVGVAT (100 aa)). Residues serine 152, aspartate 249, and histidine 279 each act as charge relay system in the active site.

The protein belongs to the AB hydrolase superfamily.

The protein localises to the mitochondrion. It catalyses the reaction S-hexadecanoyl-L-cysteinyl-[protein] + H2O = L-cysteinyl-[protein] + hexadecanoate + H(+). The catalysed reaction is mycophenolic acid O-acyl-beta-D-glucuronide + H2O = mycophenolate + D-glucuronate + H(+). Inhibited by palmostatin-B. In terms of biological role, acts as an acyl-protein thioesterase that hydrolyzes fatty acids from acylated residues in proteins. Regulates the mitochondrial S-depalmitoylation of the nucleophilic active site residue of peroxiredoxin-5/PRDX5, a key antioxidant protein, therefore modulating mitochondrial antioxidant ability. Also catalyzes the deglucuronidation of mycophenolic acid acyl-glucuronide, an active metabolite of the immunosuppressant drug mycophenolate. The protein is Palmitoyl-protein thioesterase ABHD10, mitochondrial (ABHD10) of Bos taurus (Bovine).